A 283-amino-acid polypeptide reads, in one-letter code: Protein/nucleic acid deglycase HchA (283 aa).

His-86, Glu-91, and His-123 together coordinate Zn(2+). Cys-185 acts as the Nucleophile in catalysis.

It belongs to the peptidase C56 family. HchA subfamily. As to quaternary structure, homodimer.

The protein localises to the cytoplasm. The catalysed reaction is N(omega)-(1-hydroxy-2-oxopropyl)-L-arginyl-[protein] + H2O = lactate + L-arginyl-[protein] + H(+). It carries out the reaction N(6)-(1-hydroxy-2-oxopropyl)-L-lysyl-[protein] + H2O = lactate + L-lysyl-[protein] + H(+). It catalyses the reaction S-(1-hydroxy-2-oxopropyl)-L-cysteinyl-[protein] + H2O = lactate + L-cysteinyl-[protein] + H(+). The enzyme catalyses N(omega)-(1-hydroxy-2-oxoethyl)-L-arginyl-[protein] + H2O = L-arginyl-[protein] + glycolate + H(+). The catalysed reaction is N(6)-(1-hydroxy-2-oxoethyl)-L-lysyl-[protein] + H2O = glycolate + L-lysyl-[protein] + H(+). It carries out the reaction S-(1-hydroxy-2-oxoethyl)-L-cysteinyl-[protein] + H2O = glycolate + L-cysteinyl-[protein] + H(+). It catalyses the reaction N(2)-(1-hydroxy-2-oxopropyl)-dGTP + H2O = lactate + dGTP + H(+). The enzyme catalyses N(2)-(1-hydroxy-2-oxopropyl)-GTP + H2O = lactate + GTP + H(+). The catalysed reaction is N(2)-(1-hydroxy-2-oxopropyl)-GDP + H2O = lactate + GDP + H(+). It carries out the reaction N(2)-(1-hydroxy-2-oxopropyl)-GMP + H2O = lactate + GMP + H(+). It catalyses the reaction N(2)-(1-hydroxy-2-oxoethyl)-dGTP + H2O = dGTP + glycolate + H(+). The enzyme catalyses N(2)-(1-hydroxy-2-oxoethyl)-GTP + H2O = glycolate + GTP + H(+). The catalysed reaction is N(2)-(1-hydroxy-2-oxoethyl)-GDP + H2O = glycolate + GDP + H(+). It carries out the reaction N(2)-(1-hydroxy-2-oxoethyl)-GMP + H2O = glycolate + GMP + H(+). It catalyses the reaction an N(2)-(1-hydroxy-2-oxopropyl)-guanosine in RNA + H2O = a guanosine in RNA + lactate + H(+). The enzyme catalyses an N(2)-(1-hydroxy-2-oxopropyl)-2'-deoxyguanosine in DNA + H2O = a 2'-deoxyguanosine in DNA + lactate + H(+). The catalysed reaction is an N(2)-(1-hydroxy-2-oxoethyl)-guanosine in RNA + H2O = a guanosine in RNA + glycolate + H(+). It carries out the reaction an N(2)-(1-hydroxy-2-oxoethyl)-2'-deoxyguanosine in DNA + H2O = a 2'-deoxyguanosine in DNA + glycolate + H(+). Functionally, protein and nucleotide deglycase that catalyzes the deglycation of the Maillard adducts formed between amino groups of proteins or nucleotides and reactive carbonyl groups of glyoxals. Thus, functions as a protein deglycase that repairs methylglyoxal- and glyoxal-glycated proteins, and releases repaired proteins and lactate or glycolate, respectively. Deglycates cysteine, arginine and lysine residues in proteins, and thus reactivates these proteins by reversing glycation by glyoxals. Acts on early glycation intermediates (hemithioacetals and aminocarbinols), preventing the formation of Schiff bases and advanced glycation endproducts (AGE). Also functions as a nucleotide deglycase able to repair glycated guanine in the free nucleotide pool (GTP, GDP, GMP, dGTP) and in DNA and RNA. Is thus involved in a major nucleotide repair system named guanine glycation repair (GG repair), dedicated to reversing methylglyoxal and glyoxal damage via nucleotide sanitization and direct nucleic acid repair. Plays an important role in protecting cells from carbonyl stress. This is Protein/nucleic acid deglycase HchA from Escherichia coli O157:H7.